Reading from the N-terminus, the 143-residue chain is Aspartate 1-decarboxylase (143 aa).

The Schiff-base intermediate with substrate; via pyruvic acid role is filled by serine 25. Serine 25 bears the Pyruvic acid (Ser) mark. Threonine 57 is a binding site for substrate. Tyrosine 58 serves as the catalytic Proton donor. 73–75 lines the substrate pocket; the sequence is GAA.

This sequence belongs to the PanD family. Heterooctamer of four alpha and four beta subunits. Requires pyruvate as cofactor. In terms of processing, is synthesized initially as an inactive proenzyme, which is activated by self-cleavage at a specific serine bond to produce a beta-subunit with a hydroxyl group at its C-terminus and an alpha-subunit with a pyruvoyl group at its N-terminus.

It localises to the cytoplasm. It carries out the reaction L-aspartate + H(+) = beta-alanine + CO2. It functions in the pathway cofactor biosynthesis; (R)-pantothenate biosynthesis; beta-alanine from L-aspartate: step 1/1. Catalyzes the pyruvoyl-dependent decarboxylation of aspartate to produce beta-alanine. This Mycolicibacterium paratuberculosis (strain ATCC BAA-968 / K-10) (Mycobacterium paratuberculosis) protein is Aspartate 1-decarboxylase.